Consider the following 238-residue polypeptide: Expansin-like protein 5 (238 aa).

Positions methionine 1–cysteine 21 are cleaved as a signal peptide. One can recognise an Expansin-like EG45 domain in the interval asparagine 45–asparagine 145. 2 disulfides stabilise this stretch: cysteine 48-cysteine 78 and cysteine 81-cysteine 140. N-linked (GlcNAc...) asparagine glycosylation occurs at asparagine 89.

Belongs to the expansin family. Expansin A subfamily.

It is found in the secreted. In terms of biological role, may serve to lubricate the movement of the cellulose microfibrils during cell growth and wall extension and/or may serve to maintain the fluid state of the slug cell wall. The polypeptide is Expansin-like protein 5 (expl5) (Dictyostelium discoideum (Social amoeba)).